We begin with the raw amino-acid sequence, 525 residues long: GMP synthase [glutamine-hydrolyzing] (525 aa).

A Glutamine amidotransferase type-1 domain is found at 9-207; that stretch reads RILILDFGSQ…VRDICQCEAL (199 aa). C86 serves as the catalytic Nucleophile. Active-site residues include H181 and E183. Positions 208 to 400 constitute a GMPS ATP-PPase domain; it reads WTPAKIIDDA…LGLPYDMLYR (193 aa). 235 to 241 provides a ligand contact to ATP; it reads SGGVDSS.

In terms of assembly, homodimer.

The enzyme catalyses XMP + L-glutamine + ATP + H2O = GMP + L-glutamate + AMP + diphosphate + 2 H(+). Its pathway is purine metabolism; GMP biosynthesis; GMP from XMP (L-Gln route): step 1/1. Catalyzes the synthesis of GMP from XMP. The protein is GMP synthase [glutamine-hydrolyzing] of Escherichia coli (strain K12 / MC4100 / BW2952).